A 104-amino-acid polypeptide reads, in one-letter code: Cytochrome c-551 (104 aa).

The first 22 residues, 1–22 (MKKILIPMLALGGALAMQPALA), serve as a signal peptide directing secretion. Residues Cys-34, Cys-37, His-38, and Met-83 each contribute to the heme c site.

Binds 1 heme c group covalently per subunit.

Its subcellular location is the periplasm. Its function is as follows. Electron donor for cytochrome cd1 in nitrite and nitrate respiration. This is Cytochrome c-551 (nirM) from Stutzerimonas stutzeri (Pseudomonas stutzeri).